The sequence spans 239 residues: Fatty acid metabolism regulator protein (239 aa).

Residues 6–74 (QSPAGFAEEY…HGKPTKVNNF (69 aa)) form the HTH gntR-type domain. Residues 34 to 53 (ERELSELIGVTRTTLREVLQ) constitute a DNA-binding region (H-T-H motif).

As to quaternary structure, homodimer.

The protein localises to the cytoplasm. Multifunctional regulator of fatty acid metabolism. This Cronobacter sakazakii (strain ATCC BAA-894) (Enterobacter sakazakii) protein is Fatty acid metabolism regulator protein.